A 40-amino-acid chain; its full sequence is uncharacterized protein (40 aa).

This is an uncharacterized protein from Treponema pallidum (strain Nichols).